Consider the following 1149-residue polypeptide: Golgi apparatus protein 1 homolog (1149 aa).

A signal peptide spans 1 to 19 (MWRFPLILASVCWLTTAQQ). The Extracellular segment spans residues 20 to 1115 (QNVANDPDKK…NLVMEHPERN (1096 aa)). Cys-rich GLG1 repeat units lie at residues 24–69 (NDPD…FSET), 71–135 (TLSE…KNVT), 139–207 (KCHA…VKNA), 216–276 (ILGD…NDKF), 277–344 (MDPE…NQPE), 349–411 (QPSK…ESRN), 415–475 (KLGA…NVDS), 477–549 (DMVP…YDEQ), 551–610 (PLSV…ETDN), 613–676 (RKHP…DAKE), 677–736 (MNNK…FEHK), 743–803 (DLTD…IECL), 809–867 (HLGP…IVRL), 868–938 (LQRE…RQSI), 945–1009 (DFSP…NKGL), and 1010–1070 (IRDK…DKQE). N-linked (GlcNAc...) asparagine glycosylation is present at asparagine 133. Residue asparagine 411 is glycosylated (N-linked (GlcNAc...) asparagine). A helical membrane pass occupies residues 1116–1136 (SILGYLAGFIVFILLIGCCCG). At 1137–1149 (RVSKKQYIEMKNR) the chain is on the cytoplasmic side.

The protein localises to the membrane. The chain is Golgi apparatus protein 1 homolog from Caenorhabditis elegans.